Reading from the N-terminus, the 187-residue chain is Ribosome-recycling factor (187 aa).

The protein belongs to the RRF family.

Its subcellular location is the cytoplasm. Functionally, responsible for the release of ribosomes from messenger RNA at the termination of protein biosynthesis. May increase the efficiency of translation by recycling ribosomes from one round of translation to another. The polypeptide is Ribosome-recycling factor (Methylobacterium radiotolerans (strain ATCC 27329 / DSM 1819 / JCM 2831 / NBRC 15690 / NCIMB 10815 / 0-1)).